The sequence spans 678 residues: ABC transporter B family member 6 (678 aa).

A run of 6 helical transmembrane segments spans residues Ile95–Ile115, Glu128–Ile148, Leu206–Phe226, Ala230–Val250, Phe314–Leu334, and Leu346–Leu366. The ABC transmembrane type-1 domain maps to Ile95 to Thr375. In terms of domain architecture, ABC transporter spans Ile418–Gln660. Residues Tyr427 and Gly459–Arg470 contribute to the ATP site.

It belongs to the ABC transporter superfamily. ABCB family. Heavy Metal importer (TC 3.A.1.210) subfamily.

The protein resides in the membrane. This Dictyostelium discoideum (Social amoeba) protein is ABC transporter B family member 6 (abcB6).